Here is a 391-residue protein sequence, read N- to C-terminus: Carbamoyl phosphate synthase small chain (391 aa).

The CPSase stretch occupies residues Met1–Asp189. The L-glutamine site is built by Ser47, Gly241, and Gly243. Residues His193–Ser380 enclose the Glutamine amidotransferase type-1 domain. Cys269 serves as the catalytic Nucleophile. Leu270, Gln273, Asn311, Gly313, and Phe314 together coordinate L-glutamine. Residues His353 and Glu355 contribute to the active site.

The protein belongs to the CarA family. Composed of two chains; the small (or glutamine) chain promotes the hydrolysis of glutamine to ammonia, which is used by the large (or ammonia) chain to synthesize carbamoyl phosphate. Tetramer of heterodimers (alpha,beta)4.

The enzyme catalyses hydrogencarbonate + L-glutamine + 2 ATP + H2O = carbamoyl phosphate + L-glutamate + 2 ADP + phosphate + 2 H(+). It carries out the reaction L-glutamine + H2O = L-glutamate + NH4(+). It participates in amino-acid biosynthesis; L-arginine biosynthesis; carbamoyl phosphate from bicarbonate: step 1/1. Its pathway is pyrimidine metabolism; UMP biosynthesis via de novo pathway; (S)-dihydroorotate from bicarbonate: step 1/3. Its function is as follows. Small subunit of the glutamine-dependent carbamoyl phosphate synthetase (CPSase). CPSase catalyzes the formation of carbamoyl phosphate from the ammonia moiety of glutamine, carbonate, and phosphate donated by ATP, constituting the first step of 2 biosynthetic pathways, one leading to arginine and/or urea and the other to pyrimidine nucleotides. The small subunit (glutamine amidotransferase) binds and cleaves glutamine to supply the large subunit with the substrate ammonia. In Yersinia pestis, this protein is Carbamoyl phosphate synthase small chain.